Reading from the N-terminus, the 78-residue chain is Large ribosomal subunit protein eL38 (78 aa).

Belongs to the eukaryotic ribosomal protein eL38 family. As to quaternary structure, component of the large ribosomal subunit. Mature ribosomes consist of a small (40S) and a large (60S) subunit. The 40S subunit contains about 32 different proteins and 1 molecule of RNA (18S). The 60S subunit contains 45 different proteins and 3 molecules of RNA (25S, 5.8S and 5S).

The protein resides in the cytoplasm. In terms of biological role, component of the ribosome, a large ribonucleoprotein complex responsible for the synthesis of proteins in the cell. The small ribosomal subunit (SSU) binds messenger RNAs (mRNAs) and translates the encoded message by selecting cognate aminoacyl-transfer RNA (tRNA) molecules. The large subunit (LSU) contains the ribosomal catalytic site termed the peptidyl transferase center (PTC), which catalyzes the formation of peptide bonds, thereby polymerizing the amino acids delivered by tRNAs into a polypeptide chain. The nascent polypeptides leave the ribosome through a tunnel in the LSU and interact with protein factors that function in enzymatic processing, targeting, and the membrane insertion of nascent chains at the exit of the ribosomal tunnel. This is Large ribosomal subunit protein eL38 from Candida albicans (strain SC5314 / ATCC MYA-2876) (Yeast).